Consider the following 241-residue polypeptide: Pyridoxine 5'-phosphate synthase (241 aa).

3-amino-2-oxopropyl phosphate is bound at residue asparagine 7. Position 9–10 (9–10 (DH)) interacts with 1-deoxy-D-xylulose 5-phosphate. Residue arginine 18 participates in 3-amino-2-oxopropyl phosphate binding. The active-site Proton acceptor is the histidine 43. 1-deoxy-D-xylulose 5-phosphate is bound by residues arginine 45 and histidine 50. Glutamate 70 serves as the catalytic Proton acceptor. Threonine 100 provides a ligand contact to 1-deoxy-D-xylulose 5-phosphate. The active-site Proton donor is the histidine 191. 3-amino-2-oxopropyl phosphate-binding positions include glycine 192 and 213 to 214 (GH).

This sequence belongs to the PNP synthase family. Homooctamer; tetramer of dimers.

The protein localises to the cytoplasm. The enzyme catalyses 3-amino-2-oxopropyl phosphate + 1-deoxy-D-xylulose 5-phosphate = pyridoxine 5'-phosphate + phosphate + 2 H2O + H(+). The protein operates within cofactor biosynthesis; pyridoxine 5'-phosphate biosynthesis; pyridoxine 5'-phosphate from D-erythrose 4-phosphate: step 5/5. Catalyzes the complicated ring closure reaction between the two acyclic compounds 1-deoxy-D-xylulose-5-phosphate (DXP) and 3-amino-2-oxopropyl phosphate (1-amino-acetone-3-phosphate or AAP) to form pyridoxine 5'-phosphate (PNP) and inorganic phosphate. This chain is Pyridoxine 5'-phosphate synthase, found in Acidithiobacillus ferrooxidans (strain ATCC 23270 / DSM 14882 / CIP 104768 / NCIMB 8455) (Ferrobacillus ferrooxidans (strain ATCC 23270)).